The primary structure comprises 542 residues: Quinidine resistance protein 2 (542 aa).

Residues Met1 to Cys67 are Cytoplasmic-facing. A Phosphoserine modification is found at Ser21. Thr38 carries the post-translational modification Phosphothreonine. At Ser40 the chain carries Phosphoserine. The chain crosses the membrane as a helical span at residues Ala68–Ile88. The Extracellular portion of the chain corresponds to Glu89–Asn100. The helical transmembrane segment at Val101–Ala121 threads the bilayer. Over Asp122–Arg127 the chain is Cytoplasmic. The chain crosses the membrane as a helical span at residues Pro128–Gln148. Thr149 is a topological domain (extracellular). The chain crosses the membrane as a helical span at residues Tyr150–Ile170. Over Asn171–Tyr187 the chain is Cytoplasmic. Residues Val188–Gly208 form a helical membrane-spanning segment. The Extracellular portion of the chain corresponds to Leu209–Arg216. A helical membrane pass occupies residues Ala217–Leu237. At Pro238–Glu300 the chain is on the cytoplasmic side. Residues Ile301–Ala321 form a helical membrane-spanning segment. Topologically, residues Leu322–Thr333 are extracellular. Residues Val334–Ile354 form a helical membrane-spanning segment. The Cytoplasmic segment spans residues Ala355–Pro413. A helical membrane pass occupies residues Ala414–Val434. Over Lys435 to Pro437 the chain is Extracellular. Residues Leu438–Phe458 form a helical membrane-spanning segment. The Cytoplasmic segment spans residues Ser459–Ser472. Residues Thr473 to Leu493 traverse the membrane as a helical segment. Over Ser494–Gly503 the chain is Extracellular. Residues Gly504 to Leu524 form a helical membrane-spanning segment. At Arg525–Asn542 the chain is on the cytoplasmic side.

The protein belongs to the major facilitator superfamily. CAR1 family.

The protein localises to the cell membrane. Its function is as follows. Multidrug resistance transporter involved in resistance and adaptation to quinidine and to the herbicide barban (4-chloro-2-butynyl [3-chlorophenyl] carbamate). Implicated in potassium uptake. The protein is Quinidine resistance protein 2 (QDR2) of Saccharomyces cerevisiae (strain ATCC 204508 / S288c) (Baker's yeast).